We begin with the raw amino-acid sequence, 119 residues long: Protein TusC (119 aa).

The protein belongs to the DsrF/TusC family. As to quaternary structure, heterohexamer, formed by a dimer of trimers. The hexameric TusBCD complex contains 2 copies each of TusB, TusC and TusD. The TusBCD complex interacts with TusE.

The protein localises to the cytoplasm. In terms of biological role, part of a sulfur-relay system required for 2-thiolation of 5-methylaminomethyl-2-thiouridine (mnm(5)s(2)U) at tRNA wobble positions. The polypeptide is Protein TusC (Buchnera aphidicola subsp. Schizaphis graminum (strain Sg)).